Consider the following 104-residue polypeptide: Large ribosomal subunit protein uL24 (104 aa).

Belongs to the universal ribosomal protein uL24 family. In terms of assembly, part of the 50S ribosomal subunit.

Functionally, one of two assembly initiator proteins, it binds directly to the 5'-end of the 23S rRNA, where it nucleates assembly of the 50S subunit. In terms of biological role, one of the proteins that surrounds the polypeptide exit tunnel on the outside of the subunit. The polypeptide is Large ribosomal subunit protein uL24 (Corynebacterium kroppenstedtii (strain DSM 44385 / JCM 11950 / CIP 105744 / CCUG 35717)).